Consider the following 563-residue polypeptide: Zinc finger protein 503 (563 aa).

Positions 1-10 (MITSPSASRN) are enriched in polar residues. 2 disordered regions span residues 1–48 (MITS…PLRQ) and 101–226 (SQIG…TSVS). Composition is skewed to low complexity over residues 19–33 (SSSS…AVAS) and 112–122 (SKLSSVTSNGS). Polar residues predominate over residues 174 to 194 (ATCQPFTPRTGSPNSSTSASP). The segment covering 199-211 (GKGERDEKKDSDC) has biased composition (basic and acidic residues). Polar residues predominate over residues 212–226 (NKNCSSDGSAPTSVS). The C2H2-type zinc-finger motif lies at 431–459 (HVCNWVSANGPCDKRFSSSEELLNHLRTH).

Belongs to the Elbow/Noc family. As to quaternary structure, interacts with nlz1.

It localises to the nucleus. Its function is as follows. Required for segmental gene expression during hindbrain development. May function as a transcriptional repressor. This chain is Zinc finger protein 503 (znf503), found in Danio rerio (Zebrafish).